The following is a 343-amino-acid chain: N-acetyl-gamma-glutamyl-phosphate reductase (343 aa).

The active site involves Cys150.

This sequence belongs to the NAGSA dehydrogenase family. Type 1 subfamily.

It localises to the cytoplasm. It catalyses the reaction N-acetyl-L-glutamate 5-semialdehyde + phosphate + NADP(+) = N-acetyl-L-glutamyl 5-phosphate + NADPH + H(+). It participates in amino-acid biosynthesis; L-arginine biosynthesis; N(2)-acetyl-L-ornithine from L-glutamate: step 3/4. In terms of biological role, catalyzes the NADPH-dependent reduction of N-acetyl-5-glutamyl phosphate to yield N-acetyl-L-glutamate 5-semialdehyde. The protein is N-acetyl-gamma-glutamyl-phosphate reductase of Nitrosococcus oceani (strain ATCC 19707 / BCRC 17464 / JCM 30415 / NCIMB 11848 / C-107).